We begin with the raw amino-acid sequence, 216 residues long: Imidazoleglycerol-phosphate dehydratase (216 aa).

It belongs to the imidazoleglycerol-phosphate dehydratase family.

The protein resides in the cytoplasm. It catalyses the reaction D-erythro-1-(imidazol-4-yl)glycerol 3-phosphate = 3-(imidazol-4-yl)-2-oxopropyl phosphate + H2O. It participates in amino-acid biosynthesis; L-histidine biosynthesis; L-histidine from 5-phospho-alpha-D-ribose 1-diphosphate: step 6/9. This Nocardia farcinica (strain IFM 10152) protein is Imidazoleglycerol-phosphate dehydratase.